We begin with the raw amino-acid sequence, 367 residues long: Trans-enoyl reductase ffsC (367 aa).

55-58 (CDWK) serves as a coordination point for NADP(+). A substrate-binding site is contributed by 143–150 (TGIGTLGL). NADP(+)-binding positions include 203-206 (SAKN), Tyr-221, and 268-269 (LE). 288–292 (GMAIL) lines the substrate pocket. 357–358 (VS) contacts NADP(+).

This sequence belongs to the zinc-containing alcohol dehydrogenase family. As to quaternary structure, monomer.

It participates in mycotoxin biosynthesis. Functionally, trans-enoyl reductase; part of the gene cluster that mediates the biosynthesis of the cytotoxic leucine-containing cytochalasans, including aspochalasin C, aspochalasin E, TMC-169, flavichalasine F, aspergillin PZ, aspochalasin M and flavichalasine G. The first step in the pathway is catalyzed by the hybrid PKS-NRPS ffsA that utilizes 8 units of malonyl-CoA to iteratively assemble the octaketide chain before addition of L-leucine by the C-terminal NRPS modules. Because ffsA lacks a designated enoylreductase (ER) domain, the required activity is provided the enoyl reductase fssC. The methyltransferase (MT) domain of ffsA catalyzes the alpha-methylation at C10 and C14 using S-adenosyl-L-methionine as the methyl-donating cosubstrate. Reduction by the hydrolyase ffsE, followed by dehydration and intra-molecular Diels-Alder cyclization by the Diels-Alderase ffsF then yield the required isoindolone-fused macrocycle. A number of oxidative steps catalyzed by the tailoring cytochrome P450 monooxygenase ffsD, the FAD-linked oxidoreductase ffsJ and the short-chain dehydrogenase/reductase ffsI, are further required to afford the final products. This Aspergillus flavipes protein is Trans-enoyl reductase ffsC.